A 354-amino-acid chain; its full sequence is Methionine import ATP-binding protein MetN (354 aa).

The ABC transporter domain occupies leucine 8–isoleucine 250. Glycine 42–serine 49 lines the ATP pocket.

Belongs to the ABC transporter superfamily. Methionine importer (TC 3.A.1.24) family. In terms of assembly, the complex is composed of two ATP-binding proteins (MetN), two transmembrane proteins (MetI) and a solute-binding protein (MetQ).

It localises to the cell membrane. The enzyme catalyses L-methionine(out) + ATP + H2O = L-methionine(in) + ADP + phosphate + H(+). It catalyses the reaction D-methionine(out) + ATP + H2O = D-methionine(in) + ADP + phosphate + H(+). Part of the ABC transporter complex MetNIQ involved in methionine import. Responsible for energy coupling to the transport system. In Streptococcus pyogenes serotype M1, this protein is Methionine import ATP-binding protein MetN.